A 173-amino-acid polypeptide reads, in one-letter code: Small ribosomal subunit protein uS5 (173 aa).

Positions 18-81 (LREKMIAVNR…EQARRGMFKV (64 aa)) constitute an S5 DRBM domain.

Belongs to the universal ribosomal protein uS5 family. As to quaternary structure, part of the 30S ribosomal subunit. Contacts proteins S4 and S8.

With S4 and S12 plays an important role in translational accuracy. Its function is as follows. Located at the back of the 30S subunit body where it stabilizes the conformation of the head with respect to the body. This Bordetella petrii (strain ATCC BAA-461 / DSM 12804 / CCUG 43448) protein is Small ribosomal subunit protein uS5.